Consider the following 1108-residue polypeptide: Lon protease homolog, mitochondrial (1108 aa).

The transit peptide at 1 to 62 (MLRGQSLPWR…RAFSTSSIRR (62 aa)) directs the protein to the mitochondrion. 2 disordered regions span residues 24-192 (PLLP…QKPS) and 299-318 (LPPG…PEKK). Low complexity predominate over residues 36–53 (RSNLSISRLSRSPSLSPR). Basic and acidic residues-rich tracts occupy residues 78–103 (EQKD…DSTG) and 119–146 (KVAG…KSDP). Over residues 161 to 171 (SDTKSSASNGG) the composition is skewed to polar residues. Basic and acidic residues-rich tracts occupy residues 174–188 (DGGR…DRAL) and 309–318 (NTEDKAPEKK). In terms of domain architecture, Lon N-terminal spans 200–452 (VMAIPIAKRP…KALVVLKKEL (253 aa)). ATP is bound at residue 605–612 (GPPGVGKT). The segment covering 821–855 (DKALTDEGKAAQEESKKETEEGDPKDPPADPEKST) has biased composition (basic and acidic residues). Residues 821–862 (DKALTDEGKAAQEESKKETEEGDPKDPPADPEKSTTETPRLA) are disordered. One can recognise a Lon proteolytic domain in the interval 895–1081 (TFPPGVTMGL…SEVFNILFAE (187 aa)). Active-site residues include Ser987 and Lys1030.

Belongs to the peptidase S16 family. In terms of assembly, homohexamer or homoheptamer. Organized in a ring with a central cavity.

Its subcellular location is the mitochondrion matrix. The enzyme catalyses Hydrolysis of proteins in presence of ATP.. ATP-dependent serine protease that mediates the selective degradation of misfolded, unassembled or oxidatively damaged polypeptides as well as certain short-lived regulatory proteins in the mitochondrial matrix. May also have a chaperone function in the assembly of inner membrane protein complexes. Participates in the regulation of mitochondrial gene expression and in the maintenance of the integrity of the mitochondrial genome. Binds to mitochondrial DNA in a site-specific manner. This chain is Lon protease homolog, mitochondrial (pim1), found in Aspergillus fumigatus (strain ATCC MYA-4609 / CBS 101355 / FGSC A1100 / Af293) (Neosartorya fumigata).